We begin with the raw amino-acid sequence, 432 residues long: Adenylosuccinate synthetase (432 aa).

GTP contacts are provided by residues 12 to 18 and 40 to 42; these read GDEGKGK and GHT. The Proton acceptor role is filled by D13. Mg(2+) contacts are provided by D13 and G40. Residues 13 to 16, 38 to 41, T130, R144, Q225, T240, and R304 each bind IMP; these read DEGK and NAGH. H41 acts as the Proton donor in catalysis. 300 to 306 is a substrate binding site; sequence ATTGRPR. GTP is bound by residues R306, 332–334, and 414–416; these read KLD and SVG.

Belongs to the adenylosuccinate synthetase family. As to quaternary structure, homodimer. Requires Mg(2+) as cofactor.

It is found in the cytoplasm. It carries out the reaction IMP + L-aspartate + GTP = N(6)-(1,2-dicarboxyethyl)-AMP + GDP + phosphate + 2 H(+). The protein operates within purine metabolism; AMP biosynthesis via de novo pathway; AMP from IMP: step 1/2. Its function is as follows. Plays an important role in the de novo pathway of purine nucleotide biosynthesis. Catalyzes the first committed step in the biosynthesis of AMP from IMP. In Anaeromyxobacter dehalogenans (strain 2CP-C), this protein is Adenylosuccinate synthetase.